Reading from the N-terminus, the 483-residue chain is Trehalose-6-phosphate synthase (483 aa).

R22 is a binding site for D-glucose 6-phosphate. A UDP-alpha-D-glucose-binding site is contributed by 42–43 (GG). Residues Y94 and D148 each contribute to the D-glucose 6-phosphate site. Residues R290 and K295 each coordinate UDP-alpha-D-glucose. Position 328 (R328) interacts with D-glucose 6-phosphate. 393-397 (LVAKE) contributes to the UDP-alpha-D-glucose binding site.

Belongs to the glycosyltransferase 20 family. Homotetramer.

It carries out the reaction ADP-alpha-D-glucose + D-glucose 6-phosphate = alpha,alpha-trehalose 6-phosphate + ADP + H(+). The enzyme catalyses CDP-alpha-D-glucose + D-glucose 6-phosphate = alpha,alpha-trehalose 6-phosphate + CDP + H(+). It catalyses the reaction GDP-alpha-D-glucose + D-glucose 6-phosphate = alpha,alpha-trehalose 6-phosphate + GDP + H(+). The catalysed reaction is TDP-alpha-D-glucose + D-glucose 6-phosphate = 5-methyl-UDP + alpha,alpha-trehalose 6-phosphate + H(+). It carries out the reaction D-glucose 6-phosphate + UDP-alpha-D-glucose = alpha,alpha-trehalose 6-phosphate + UDP + H(+). It functions in the pathway glycan biosynthesis; trehalose biosynthesis. Its function is as follows. Probably involved in the osmoprotection via the biosynthesis of trehalose and in the production of glycogen and alpha-glucan via the TreS-Pep2 branch involved in the biosynthesis of maltose-1-phosphate (M1P). Catalyzes the transfer of glucose from UDP-glucose (UDP-Glc) to D-glucose 6-phosphate (Glc-6-P) to form trehalose-6-phosphate. Probably also able to use ADP-Glc, CDP-Glc, GDP-Glc and TDP-Glc as glucosyl donors. This is Trehalose-6-phosphate synthase from Mycobacterium sp. (strain JLS).